Reading from the N-terminus, the 501-residue chain is Cytokinin dehydrogenase 2 (501 aa).

An N-terminal signal peptide occupies residues 1 to 22; that stretch reads MANLRLMITLITVLMITKSSNG. Residues Asn32 and Asn51 are each glycosylated (N-linked (GlcNAc...) asparagine). The FAD-binding PCMH-type domain maps to 53 to 226; it reads TTVTPGGVIC…TRARIVLDHA (174 aa). The FAD site is built by Ala87, Gly89, and Gly91. The residue at position 92 (His92) is a Pros-8alpha-FAD histidine. Residues Ser93 and Gln97 each contribute to the FAD site. A glycan (N-linked (GlcNAc...) asparagine) is linked at Asn107. Residues Asp150, Thr155, Ser161, Ile165, Ile216, Tyr460, Ser495, and Gln498 each coordinate FAD.

The protein belongs to the oxygen-dependent FAD-linked oxidoreductase family. FAD serves as cofactor. Expressed in the shoot apex, in stipules, and occasionally in the most apical part of the inflorescence stems. Not detected in roots.

Its subcellular location is the endoplasmic reticulum. It localises to the secreted. It is found in the extracellular space. It carries out the reaction N(6)-dimethylallyladenine + A + H2O = 3-methyl-2-butenal + adenine + AH2. Its function is as follows. Catalyzes the oxidation of cytokinins, a family of N(6)-substituted adenine derivatives that are plant hormones, where the substituent is an isopentenyl group. Modulates asymmetric cytokinin signaling in emerged lateral roots. Its activity determines cell elongation and number in emerged lateral roots and defines angular growth of lateral roots. In Arabidopsis thaliana (Mouse-ear cress), this protein is Cytokinin dehydrogenase 2 (CKX2).